The following is a 129-amino-acid chain: GEL complex subunit OPTI (129 aa).

Over 1–44 the chain is Cytoplasmic; sequence MSGGRRKEEPPQPQLANGALKVSVWSKVLRSDAAWDDKDEFLDV. A helical transmembrane segment spans residues 45–65; that stretch reads IYWFRQIIALVLGVIWGVLPL. Position 66 (Arg66) is a topological domain, lumenal. A helical transmembrane segment spans residues 67–84; that stretch reads GFLGIAGFCLINAGVLYL. Residues 85-103 lie on the Cytoplasmic side of the membrane; that stretch reads YFSNYLQIDEEEYGGTWEL. A helical transmembrane segment spans residues 104–127; it reads TKEGFMTSFALFMVIWIIFYTAIH. The Lumenal portion of the chain corresponds to 128–129; sequence YD.

The protein belongs to the EMC6 family. As to quaternary structure, component of the GET- and EMC-like (GEL) complex, composed of RAB5IF/OPTI and TMCO1. The GEL complex is part of the multi-pass translocon (MPT) complex, composed of three subcomplexes, the GEL complex (composed of RAB5IF/OPTI and TMCO1), the BOS complex (composed of NCLN/Nicalin, NOMO1 and TMEM147) and the PAT complex (composed of WDR83OS/Asterix and CCDC47). The MPT complex associates with the SEC61 complex. Interacts with NDUFS3, NDUFA4, NDUFV1, NDUFA9 and NDUFS8 of the mitochondrial membrane respiratory chain NADH dehydrogenase (Complex I). Interacts with UQCRC2 of the ubiquinol-cytochrome c reductase complex (Complex III). Interacts with COX5A and COX7C of the cytochrome c oxidase complex (Complex IV). In terms of tissue distribution, expressed in neuronal cells.

It localises to the endoplasmic reticulum membrane. The protein resides in the mitochondrion inner membrane. Functionally, component of the multi-pass translocon (MPT) complex that mediates insertion of multi-pass membrane proteins into the lipid bilayer of membranes. The MPT complex takes over after the SEC61 complex: following membrane insertion of the first few transmembrane segments of proteins by the SEC61 complex, the MPT complex occludes the lateral gate of the SEC61 complex to promote insertion of subsequent transmembrane regions. Within the MPT complex, the GEL subcomplex may mediate insertion of transmembrane regions into the membrane. In addition to its role in multi-pass membrane insertion, RAB5IF/OPTI also acts as an assembly factor for mitochondrial respiratory complexes. The polypeptide is GEL complex subunit OPTI (Mus musculus (Mouse)).